The following is a 78-amino-acid chain: Beta-defensin 105A (78 aa).

Positions 1–27 are cleaved as a signal peptide; it reads MALIRKTFYFVFAVFFILVQQPSGCQA. Cystine bridges form between Cys43-Cys74, Cys53-Cys67, and Cys57-Cys73.

This sequence belongs to the beta-defensin family.

Its subcellular location is the secreted. Its function is as follows. Has antimicrobial activity. This is Beta-defensin 105A (DEFB105A) from Macaca fascicularis (Crab-eating macaque).